The primary structure comprises 306 residues: Serine/threonine-protein phosphatase PP-X homolog 4 (306 aa).

Mn(2+) is bound by residues D53, H55, D81, and N113. Residue H114 is the Proton donor of the active site. Residues H163 and H237 each contribute to the Mn(2+) site.

The protein belongs to the PPP phosphatase family. PP-4 (PP-X) subfamily. Mn(2+) is required as a cofactor.

It catalyses the reaction O-phospho-L-seryl-[protein] + H2O = L-seryl-[protein] + phosphate. The enzyme catalyses O-phospho-L-threonyl-[protein] + H2O = L-threonyl-[protein] + phosphate. The protein is Serine/threonine-protein phosphatase PP-X homolog 4 (Ppx4) of Paramecium tetraurelia.